Reading from the N-terminus, the 248-residue chain is Pyridoxine 5'-phosphate synthase (248 aa).

Position 7 (Asn-7) interacts with 3-amino-2-oxopropyl phosphate. 9-10 (DH) contacts 1-deoxy-D-xylulose 5-phosphate. Arg-18 lines the 3-amino-2-oxopropyl phosphate pocket. The active-site Proton acceptor is the His-52. The 1-deoxy-D-xylulose 5-phosphate site is built by Arg-54 and His-59. Glu-79 (proton acceptor) is an active-site residue. Residue Thr-109 coordinates 1-deoxy-D-xylulose 5-phosphate. The Proton donor role is filled by His-201. Residues Gly-202 and 223 to 224 (GH) contribute to the 3-amino-2-oxopropyl phosphate site.

This sequence belongs to the PNP synthase family. In terms of assembly, homooctamer; tetramer of dimers.

Its subcellular location is the cytoplasm. It catalyses the reaction 3-amino-2-oxopropyl phosphate + 1-deoxy-D-xylulose 5-phosphate = pyridoxine 5'-phosphate + phosphate + 2 H2O + H(+). It participates in cofactor biosynthesis; pyridoxine 5'-phosphate biosynthesis; pyridoxine 5'-phosphate from D-erythrose 4-phosphate: step 5/5. Catalyzes the complicated ring closure reaction between the two acyclic compounds 1-deoxy-D-xylulose-5-phosphate (DXP) and 3-amino-2-oxopropyl phosphate (1-amino-acetone-3-phosphate or AAP) to form pyridoxine 5'-phosphate (PNP) and inorganic phosphate. This Opitutus terrae (strain DSM 11246 / JCM 15787 / PB90-1) protein is Pyridoxine 5'-phosphate synthase.